The sequence spans 525 residues: Estrogen receptor (525 aa).

The segment at 1–59 (PTSPLVFVPSSPRLSPFMHPPSHHYLETTSTPVYRSSVSSSQQQLSREDQCGTSDDSYS) is disordered. The tract at residues 1–82 (PTSPLVFVPS…GFEMAKEMRF (82 aa)) is modulating. A compositionally biased stretch (low complexity) spans 36-45 (SSVSSSQQQL). 2 consecutive NR C4-type zinc fingers follow at residues 83 to 103 (CAVC…CEGC) and 119 to 143 (CPAT…LRKC). Residues 83-148 (CAVCSDYASG…RLRKCYQVGM (66 aa)) constitute a DNA-binding region (nuclear receptor). The interval 149–209 (MKGGVRKDRG…GGGKSSIIGM (61 aa)) is hinge. A compositionally biased stretch (basic and acidic residues) spans 154–182 (RKDRGRVLRRDKRRTGTSDKASKDLEHRT). Positions 154–203 (RKDRGRVLRRDKRRTGTSDKASKDLEHRTAPPQDRRKHSSSSSSAGGGGK) are disordered. Positions 210–446 (SPDQVLLLLQ…DLLLEMLDAH (237 aa)) constitute an NR LBD domain. Basic and acidic residues predominate over residues 452–465 (DRPAESWSQADREP). Positions 452-525 (DRPAESWSQA…GPRSDCTHIL (74 aa)) are disordered. The segment covering 479-493 (SGGGDGGPSSAGSGS) has biased composition (gly residues).

It belongs to the nuclear hormone receptor family. NR3 subfamily. In terms of assembly, binds DNA as a homodimer. Can form a heterodimer with ER-beta. As to expression, abundant in the liver, less abundant in the testes and barely detectable in the ovary and brain.

The protein localises to the nucleus. Functionally, the steroid hormones and their receptors are involved in the regulation of eukaryotic gene expression and affect cellular proliferation and differentiation in target tissues. This Micropogonias undulatus (Atlantic croaker) protein is Estrogen receptor (esr1).